The sequence spans 249 residues: Segregation and condensation protein A (249 aa).

It belongs to the ScpA family. In terms of assembly, component of a cohesin-like complex composed of ScpA, ScpB and the Smc homodimer, in which ScpA and ScpB bind to the head domain of Smc. The presence of the three proteins is required for the association of the complex with DNA.

The protein resides in the cytoplasm. Functionally, participates in chromosomal partition during cell division. May act via the formation of a condensin-like complex containing Smc and ScpB that pull DNA away from mid-cell into both cell halves. The protein is Segregation and condensation protein A of Clostridium acetobutylicum (strain ATCC 824 / DSM 792 / JCM 1419 / IAM 19013 / LMG 5710 / NBRC 13948 / NRRL B-527 / VKM B-1787 / 2291 / W).